Here is a 213-residue protein sequence, read N- to C-terminus: Adenylate kinase (213 aa).

ATP is bound at residue 10–15; sequence GCGKGT. The tract at residues 30 to 59 is NMP; that stretch reads STGDLMRKEISLNTRLGLKCQEYMNAGKYV. AMP contacts are provided by residues threonine 31, arginine 36, 57-59, 83-86, and glutamine 90; these read KYV and GYPR. Residues 124-161 form an LID region; the sequence is NRLVCPLCKASFNLETRKPKQEGLCDFDNTKLVKRSDD. Residue arginine 125 participates in ATP binding. Zn(2+) is bound by residues cysteine 128 and cysteine 131. 134–135 lines the ATP pocket; it reads SF. Zn(2+)-binding residues include cysteine 148 and aspartate 151. AMP-binding residues include arginine 158 and arginine 169. Residue aspartate 197 participates in ATP binding.

Belongs to the adenylate kinase family. As to quaternary structure, monomer.

The protein localises to the cytoplasm. It catalyses the reaction AMP + ATP = 2 ADP. It functions in the pathway purine metabolism; AMP biosynthesis via salvage pathway; AMP from ADP: step 1/1. In terms of biological role, catalyzes the reversible transfer of the terminal phosphate group between ATP and AMP. Plays an important role in cellular energy homeostasis and in adenine nucleotide metabolism. The polypeptide is Adenylate kinase (Mycoplasma mycoides subsp. mycoides SC (strain CCUG 32753 / NCTC 10114 / PG1)).